A 398-amino-acid polypeptide reads, in one-letter code: Carbamoyl phosphate synthase small chain (398 aa).

CPSase stretches follow at residues 1-205 (MTQT…TNDA) and 1-207 (MTQT…DACN). 3 residues coordinate L-glutamine: serine 60, glycine 257, and glycine 259. Residues 209–397 (HIVAIDYGIK…FNLIMDYKRT (189 aa)) form the Glutamine amidotransferase type-1 domain. Cysteine 286 acts as the Nucleophile in catalysis. L-glutamine-binding residues include leucine 287, glutamine 290, asparagine 328, glycine 330, and phenylalanine 331. Catalysis depends on residues histidine 370 and glutamate 372.

The protein belongs to the CarA family. As to quaternary structure, composed of two chains; the small (or glutamine) chain promotes the hydrolysis of glutamine to ammonia, which is used by the large (or ammonia) chain to synthesize carbamoyl phosphate. Tetramer of heterodimers (alpha,beta)4.

The catalysed reaction is hydrogencarbonate + L-glutamine + 2 ATP + H2O = carbamoyl phosphate + L-glutamate + 2 ADP + phosphate + 2 H(+). The enzyme catalyses L-glutamine + H2O = L-glutamate + NH4(+). It participates in amino-acid biosynthesis; L-arginine biosynthesis; carbamoyl phosphate from bicarbonate: step 1/1. The protein operates within pyrimidine metabolism; UMP biosynthesis via de novo pathway; (S)-dihydroorotate from bicarbonate: step 1/3. Functionally, small subunit of the glutamine-dependent carbamoyl phosphate synthetase (CPSase). CPSase catalyzes the formation of carbamoyl phosphate from the ammonia moiety of glutamine, carbonate, and phosphate donated by ATP, constituting the first step of 2 biosynthetic pathways, one leading to arginine and/or urea and the other to pyrimidine nucleotides. The small subunit (glutamine amidotransferase) binds and cleaves glutamine to supply the large subunit with the substrate ammonia. The polypeptide is Carbamoyl phosphate synthase small chain (Bartonella quintana (strain Toulouse) (Rochalimaea quintana)).